The chain runs to 338 residues: MINSTSTQPPDESCSQNLLITQQIIPVLYCMVFIAGILLNGVSGWIFFYVPSSKSFIIYLKNIVIADFVMSLTFPFKILGDSGLGPWQLNVFVCRVSAVLFYVNMYVSIVFFGLISFDRYYKIVKPLWTSFIQSVSYSKLLSVIVWMLMLLLAVPNIILTNQSVREVTQIKCIELKSELGRKWHKASNYIFVAIFWIVFLLLIVFYTAITKKIFKSHLKSSRNSTSVKKKSSRNIFSIVFVFFVCFVPYHIARIPYTKSQTEAHYSCQSKEILRYMKEFTLLLSAANVCLDPIIYFFLCQPFREILCKKLHIPLKAQNDLDISRIKRGNTTLESTDTL.

At 1–29 (MINSTSTQPPDESCSQNLLITQQIIPVLY) the chain is on the extracellular side. N-linked (GlcNAc...) asparagine glycosylation is present at Asn3. A helical membrane pass occupies residues 30–50 (CMVFIAGILLNGVSGWIFFYV). The Cytoplasmic segment spans residues 51–55 (PSSKS). The chain crosses the membrane as a helical span at residues 56–76 (FIIYLKNIVIADFVMSLTFPF). Residues 77 to 96 (KILGDSGLGPWQLNVFVCRV) are Extracellular-facing. Cys94 and Cys172 are disulfide-bonded. Residues 97–117 (SAVLFYVNMYVSIVFFGLISF) form a helical membrane-spanning segment. Residues 118-139 (DRYYKIVKPLWTSFIQSVSYSK) are Cytoplasmic-facing. A helical membrane pass occupies residues 140-160 (LLSVIVWMLMLLLAVPNIILT). Asn161 is a glycosylation site (N-linked (GlcNAc...) asparagine). The Extracellular segment spans residues 161–188 (NQSVREVTQIKCIELKSELGRKWHKASN). The helical transmembrane segment at 189 to 209 (YIFVAIFWIVFLLLIVFYTAI) threads the bilayer. Over 210–234 (TKKIFKSHLKSSRNSTSVKKKSSRN) the chain is Cytoplasmic. A helical membrane pass occupies residues 235–255 (IFSIVFVFFVCFVPYHIARIP). Topologically, residues 256–278 (YTKSQTEAHYSCQSKEILRYMKE) are extracellular. A helical transmembrane segment spans residues 279–299 (FTLLLSAANVCLDPIIYFFLC). The Cytoplasmic portion of the chain corresponds to 300–338 (QPFREILCKKLHIPLKAQNDLDISRIKRGNTTLESTDTL).

Belongs to the G-protein coupled receptor 1 family. In terms of tissue distribution, highest expression in the placenta, adipose tissue, stomach and intestine, intermediate levels in the brain, spleen, lung and heart, lowest levels in the kidney.

It localises to the cell membrane. Functionally, receptor for UDP-glucose and other UDP-sugar coupled to G-proteins. Not activated by ATP, ADP, UTP or ATP. In Homo sapiens (Human), this protein is P2Y purinoceptor 14 (P2RY14).